The chain runs to 131 residues: Peptidyl-prolyl cis-trans isomerase NIMA-interacting 4 (131 aa).

Residues 1 to 25 (MPPKGKSGSGKGGKGGAASGSDSAD) are necessary for nuclear localization and DNA-binding. A disordered region spans residues 1–39 (MPPKGKSGSGKGGKGGAASGSDSADKKSQGPKGGGNAVK). The tract at residues 1-41 (MPPKGKSGSGKGGKGGAASGSDSADKKSQGPKGGGNAVKVR) is necessary for association with the pre-rRNP complexes. Gly residues predominate over residues 7 to 18 (SGSGKGGKGGAA). Ser19 carries the phosphoserine; by CK2 modification. Positions 35–129 (GNAVKVRHIL…FGYHIIMVEG (95 aa)) constitute a PpiC domain.

The protein belongs to the PpiC/parvulin rotamase family. PIN4 subfamily. As to quaternary structure, found in pre-ribosomal ribonucleoprotein (pre-rRNP) complexes. Post-translationally, phosphorylated. Phosphorylation occurs both in the nucleus and the cytoplasm. Phosphorylation at Ser-19 does not affect its PPIase activity but is required for nuclear localization, and the dephosphorylation is a prerequisite for the binding to DNA. The unphosphorylated form associates with the pre-rRNP complexes in the nucleus.

It is found in the nucleus. The protein resides in the nucleolus. Its subcellular location is the cytoplasm. It localises to the cytoskeleton. The protein localises to the spindle. It carries out the reaction [protein]-peptidylproline (omega=180) = [protein]-peptidylproline (omega=0). Its function is as follows. Involved as a ribosomal RNA processing factor in ribosome biogenesis. Binds to tightly bent AT-rich stretches of double-stranded DNA. This Mus musculus (Mouse) protein is Peptidyl-prolyl cis-trans isomerase NIMA-interacting 4 (Pin4).